The following is a 219-amino-acid chain: Phosphatidylserine decarboxylase proenzyme (219 aa).

The active-site Schiff-base intermediate with substrate; via pyruvic acid is Ser-182. Residue Ser-182 is modified to Pyruvic acid (Ser); by autocatalysis.

Belongs to the phosphatidylserine decarboxylase family. PSD-A subfamily. Heterodimer of a large membrane-associated beta subunit and a small pyruvoyl-containing alpha subunit. The cofactor is pyruvate. Post-translationally, is synthesized initially as an inactive proenzyme. Formation of the active enzyme involves a self-maturation process in which the active site pyruvoyl group is generated from an internal serine residue via an autocatalytic post-translational modification. Two non-identical subunits are generated from the proenzyme in this reaction, and the pyruvate is formed at the N-terminus of the alpha chain, which is derived from the carboxyl end of the proenzyme. The post-translation cleavage follows an unusual pathway, termed non-hydrolytic serinolysis, in which the side chain hydroxyl group of the serine supplies its oxygen atom to form the C-terminus of the beta chain, while the remainder of the serine residue undergoes an oxidative deamination to produce ammonia and the pyruvoyl prosthetic group on the alpha chain.

The protein localises to the cell membrane. It carries out the reaction a 1,2-diacyl-sn-glycero-3-phospho-L-serine + H(+) = a 1,2-diacyl-sn-glycero-3-phosphoethanolamine + CO2. Its pathway is phospholipid metabolism; phosphatidylethanolamine biosynthesis; phosphatidylethanolamine from CDP-diacylglycerol: step 2/2. Catalyzes the formation of phosphatidylethanolamine (PtdEtn) from phosphatidylserine (PtdSer). This is Phosphatidylserine decarboxylase proenzyme from Chlorobium phaeovibrioides (strain DSM 265 / 1930) (Prosthecochloris vibrioformis (strain DSM 265)).